The chain runs to 495 residues: UDP-N-acetylmuramoyl-L-alanyl-D-glutamate--2,6-diaminopimelate ligase (495 aa).

Residues L28, S30, and 45–47 (HRV) contribute to the UDP-N-acetyl-alpha-D-muramoyl-L-alanyl-D-glutamate site. 117–123 (GTNGKTT) provides a ligand contact to ATP. UDP-N-acetyl-alpha-D-muramoyl-L-alanyl-D-glutamate-binding positions include N158, 159 to 160 (TT), S186, Q192, and R194. An N6-carboxylysine modification is found at K226. Meso-2,6-diaminopimelate-binding positions include R394, 418 to 421 (DNPR), G469, and E473. The Meso-diaminopimelate recognition motif signature appears at 418 to 421 (DNPR).

It belongs to the MurCDEF family. MurE subfamily. Requires Mg(2+) as cofactor. In terms of processing, carboxylation is probably crucial for Mg(2+) binding and, consequently, for the gamma-phosphate positioning of ATP.

Its subcellular location is the cytoplasm. The catalysed reaction is UDP-N-acetyl-alpha-D-muramoyl-L-alanyl-D-glutamate + meso-2,6-diaminopimelate + ATP = UDP-N-acetyl-alpha-D-muramoyl-L-alanyl-gamma-D-glutamyl-meso-2,6-diaminopimelate + ADP + phosphate + H(+). It participates in cell wall biogenesis; peptidoglycan biosynthesis. Its function is as follows. Catalyzes the addition of meso-diaminopimelic acid to the nucleotide precursor UDP-N-acetylmuramoyl-L-alanyl-D-glutamate (UMAG) in the biosynthesis of bacterial cell-wall peptidoglycan. The sequence is that of UDP-N-acetylmuramoyl-L-alanyl-D-glutamate--2,6-diaminopimelate ligase from Histophilus somni (strain 129Pt) (Haemophilus somnus).